A 442-amino-acid chain; its full sequence is Proline--tRNA ligase (442 aa).

The protein belongs to the class-II aminoacyl-tRNA synthetase family. ProS type 2 subfamily. Homodimer.

It is found in the cytoplasm. It carries out the reaction tRNA(Pro) + L-proline + ATP = L-prolyl-tRNA(Pro) + AMP + diphosphate. Its function is as follows. Catalyzes the attachment of proline to tRNA(Pro) in a two-step reaction: proline is first activated by ATP to form Pro-AMP and then transferred to the acceptor end of tRNA(Pro). The chain is Proline--tRNA ligase from Brucella melitensis biotype 2 (strain ATCC 23457).